The sequence spans 819 residues: Capsid-associated protein Vp91 (819 aa).

An N-terminal signal peptide occupies residues 1–18 (MSDVVLLVLAIILITIFT). Residues 147-196 (CVPVDPCAGRAPGRYPMDERLLDTLVHNQPSDKDYSAGEHLHHPTLYLRC) form a C2HC BV-type zinc finger. 2 cysteine pairs are disulfide-bonded: Cys207–Cys220 and Cys260–Cys273. Asn210 carries N-linked (GlcNAc...) asparagine; by host glycosylation. In terms of domain architecture, Chitin-binding type-2 spans 223-281 (NELCEGRPDGFVLAYFPETLRVNEFVECRGGKHVVARCPDQQVFDRALMTCVQTHPCAF). Residues Asn588 and Asn609 are each glycosylated (N-linked (GlcNAc...) asparagine; by host). Residues 650-671 (GDGDHWAPEAPPTQPEAPPAPE) form a disordered region. Over residues 658–671 (EAPPTQPEAPPAPE) the composition is skewed to pro residues. Asn752 carries N-linked (GlcNAc...) asparagine; by host glycosylation.

It is found in the virion. Functionally, probable capsid-associated protein. The chain is Capsid-associated protein Vp91 (p91) from Orgyia pseudotsugata (Douglas-fir tussock moth).